A 463-amino-acid polypeptide reads, in one-letter code: tRNA modification GTPase MnmE (463 aa).

(6S)-5-formyl-5,6,7,8-tetrahydrofolate-binding residues include Arg29, Glu91, and Arg130. Residues 225-384 (GLKVAIVGRP…LETAILEIVQ (160 aa)) form the TrmE-type G domain. Asn235 provides a ligand contact to K(+). Residues 235-240 (NVGKSS), 254-260 (TDLPGTT), and 279-282 (DTAG) contribute to the GTP site. Mg(2+) is bound at residue Ser239. K(+)-binding residues include Thr254, Leu256, and Thr259. Thr260 is a binding site for Mg(2+). Lys463 provides a ligand contact to (6S)-5-formyl-5,6,7,8-tetrahydrofolate.

The protein belongs to the TRAFAC class TrmE-Era-EngA-EngB-Septin-like GTPase superfamily. TrmE GTPase family. In terms of assembly, homodimer. Heterotetramer of two MnmE and two MnmG subunits. Requires K(+) as cofactor.

Its subcellular location is the cytoplasm. In terms of biological role, exhibits a very high intrinsic GTPase hydrolysis rate. Involved in the addition of a carboxymethylaminomethyl (cmnm) group at the wobble position (U34) of certain tRNAs, forming tRNA-cmnm(5)s(2)U34. This is tRNA modification GTPase MnmE from Trichormus variabilis (strain ATCC 29413 / PCC 7937) (Anabaena variabilis).